Consider the following 414-residue polypeptide: Eukaryotic initiation factor 4A (414 aa).

The Q motif signature appears at 41–69; sequence ESFDDMGLQENLLRGIYAYGFEKPSAIQQ. The Helicase ATP-binding domain maps to 72–242; the sequence is IVPFCKGLDV…RKFMNKPVRI (171 aa). 85–92 is an ATP binding site; that stretch reads AQSGTGKT. A DEAD box motif is present at residues 190–193; that stretch reads DEAD. The 162-residue stretch at 253 to 414 folds into the Helicase C-terminal domain; it reads GIKQFYVNVE…ELPANVADLL (162 aa).

Belongs to the DEAD box helicase family. eIF4A subfamily. In terms of assembly, eIF4F is a multi-subunit complex, the composition of which varies with external and internal environmental conditions. It is composed of at least EIF4A, EIF4E and EIF4G.

The catalysed reaction is ATP + H2O = ADP + phosphate + H(+). Its function is as follows. ATP-dependent RNA helicase which is a subunit of the eIF4F complex involved in cap recognition and is required for mRNA binding to ribosome. In the current model of translation initiation, eIF4A unwinds RNA secondary structures in the 5'-UTR of mRNAs which is necessary to allow efficient binding of the small ribosomal subunit, and subsequent scanning for the initiator codon. The sequence is that of Eukaryotic initiation factor 4A from Triticum aestivum (Wheat).